We begin with the raw amino-acid sequence, 448 residues long: Asparagine--tRNA ligase (448 aa).

The protein belongs to the class-II aminoacyl-tRNA synthetase family. In terms of assembly, homodimer.

Its subcellular location is the cytoplasm. The catalysed reaction is tRNA(Asn) + L-asparagine + ATP = L-asparaginyl-tRNA(Asn) + AMP + diphosphate + H(+). This Streptococcus agalactiae serotype Ia (strain ATCC 27591 / A909 / CDC SS700) protein is Asparagine--tRNA ligase.